A 259-amino-acid polypeptide reads, in one-letter code: Protein FAM220A (259 aa).

Interacts with transcriptional activator STAT3; the interaction occurs in both the nucleus and the cytoplasm, is enhanced by IL6 and promotes STAT3 dephosphorylation, leading to negative regulation of STAT3 transcriptional activator activity. Can interact with both unphosphorylated and phosphorylated STAT3 but interacts preferentially with phosphorylated STAT3 in the nucleus. Interacts with protein phosphatase PTPN2/TC45; this promotes interaction of PTPN2 with STAT3, leading to dephosphorylation of STAT3 by PTPN2.

The protein resides in the nucleus. The protein localises to the cytoplasm. It localises to the cytoplasmic vesicle. It is found in the secretory vesicle. Its subcellular location is the acrosome. Functionally, promotes dephosphorylation of transcriptional activator STAT3 by interacting with both STAT3 and protein phosphatase PTPN2. This promotes interaction of PTPN2 with STAT3 and mediates STAT3 dephosphorylation by PTPN2, leading to negative regulation of STAT3 transcriptional activator activity. May be required for spermiogenesis or sperm function. The sequence is that of Protein FAM220A (FAM220A) from Macaca fascicularis (Crab-eating macaque).